The chain runs to 130 residues: Small ribosomal subunit protein uS8 (130 aa).

This sequence belongs to the universal ribosomal protein uS8 family. As to quaternary structure, part of the 30S ribosomal subunit.

Its function is as follows. One of the primary rRNA binding proteins, it binds directly to 16S rRNA central domain where it helps coordinate assembly of the platform of the 30S subunit. In Halorubrum lacusprofundi (strain ATCC 49239 / DSM 5036 / JCM 8891 / ACAM 34), this protein is Small ribosomal subunit protein uS8.